The chain runs to 140 residues: Large ribosomal subunit protein uL22 (140 aa).

This sequence belongs to the universal ribosomal protein uL22 family. As to quaternary structure, part of the 50S ribosomal subunit.

Functionally, this protein binds specifically to 23S rRNA; its binding is stimulated by other ribosomal proteins, e.g. L4, L17, and L20. It is important during the early stages of 50S assembly. It makes multiple contacts with different domains of the 23S rRNA in the assembled 50S subunit and ribosome. In terms of biological role, the globular domain of the protein is located near the polypeptide exit tunnel on the outside of the subunit, while an extended beta-hairpin is found that lines the wall of the exit tunnel in the center of the 70S ribosome. This is Large ribosomal subunit protein uL22 from Parafrankia sp. (strain EAN1pec).